Here is a 772-residue protein sequence, read N- to C-terminus: MTAKSAAAAARATVYGYPRQGPNRELKKAIEGYWKGRVSAPELRSLAADLRAANWRRLADAGIDEVPAGDFSYYDHVLDTTVMVGAIPERHRAAVAADALDGYFAMARGTQEVAPLEMTKWFDTNYHYLVPELGPDTVFTADSTKQVTELAEAVALGLTARPVLVGPVTYLLLAKPAPGAPADFEPLTLLDRLLPVYAEVLTDLRAAGAEWVQLDEPAFVQDRTPAELNALERAYRELGALTDRPKLLVASYFDRLGDALPVLAKAPIEGLALDFTDAAATNLDALAAVGGLPGKRLVAGVVNGRNIWINDLQKSLSTLGTLLGLADRVDVSASCSLLHVPLDTGAERDIEPQILRWLAFARQKTAEIVTLAKGLAQGTDAITGELAASRADMASRAGSPITRNPAVRARAEAVTDDDARRSQPYAERTAAQRAHLGLPPLPTTTIGSFPQTGEIRAARADLRDGRIDIAGYEERIRAEIQEVISFQEKTGLDVLVHGEPERNDMVQYFAEQLTGYLATQHGWVQSYGTRYVRPPILAGDISRPEPMTVRWTTYAQSLTEKPVKGMLTGPVTMLAWSFVRDDQPLGDTARQVALALRDEVNDLEAAGTSVIQVDEPALRETLPLRAADHTAYLAWATEAFRLTTSGVRPDTQIHTHMCYAEFGDIVQAIDDLDADVISLEAARSHMQVAHELATHGYPREAGPGVYDIHSPRVPSAEEAAALLRTGLKAIPAERLWVNPDCGLKTRGWPETRASLENLVATARTLRGELSAS.

Residues 24–27 (RELK) and K120 contribute to the 5-methyltetrahydropteroyltri-L-glutamate site. Residues 446-448 (IGS) and E499 each bind L-homocysteine. L-methionine is bound by residues 446–448 (IGS) and E499. A 5-methyltetrahydropteroyltri-L-glutamate-binding site is contributed by W576. Residue D614 participates in L-homocysteine binding. D614 provides a ligand contact to L-methionine. 5-methyltetrahydropteroyltri-L-glutamate is bound at residue E620. Residues H656, C658, and E680 each contribute to the Zn(2+) site. The active-site Proton donor is H709. C741 serves as a coordination point for Zn(2+).

It belongs to the vitamin-B12 independent methionine synthase family. It depends on Zn(2+) as a cofactor.

It carries out the reaction 5-methyltetrahydropteroyltri-L-glutamate + L-homocysteine = tetrahydropteroyltri-L-glutamate + L-methionine. It functions in the pathway amino-acid biosynthesis; L-methionine biosynthesis via de novo pathway; L-methionine from L-homocysteine (MetE route): step 1/1. Functionally, catalyzes the transfer of a methyl group from 5-methyltetrahydrofolate to homocysteine resulting in methionine formation. This is 5-methyltetrahydropteroyltriglutamate--homocysteine methyltransferase from Streptomyces coelicolor (strain ATCC BAA-471 / A3(2) / M145).